The primary structure comprises 351 residues: Outer membrane protein A (351 aa).

An N-terminal signal peptide occupies residues 1-21; that stretch reads MKKTAIAITVALAGFATVAQA. 8 beta stranded membrane-spanning segments follow: residues 27–37, 55–66, 70–78, 96–107, 112–120, 147–156, 161–168, and 187–195; these read TWYTGAKLGWS, QLGAGAFGGYQV, VGFEMGYDW, QGVQLTAKLGYP, LDVYTRLGG, PVFAGGVEWA, IATRLEYQ, and LLSLGVSYR. Tandem repeats lie at residues 206-207, 208-209, 210-211, and 212-213. Residues 206–213 form a 4 X 2 AA tandem repeats of A-P region; that stretch reads APAPAPAP. The region spanning 215 to 343 is the OmpA-like domain; that stretch reads VQTKHFTLKS…RVEIEVKGIK (129 aa). C316 and C328 are disulfide-bonded.

This sequence belongs to the outer membrane OOP (TC 1.B.6) superfamily. OmpA family. As to quaternary structure, monomer and homodimer.

Its subcellular location is the cell outer membrane. Functionally, with TolR probably plays a role in maintaining the position of the peptidoglycan cell wall in the periplasm. Acts as a porin with low permeability that allows slow penetration of small solutes; an internal gate slows down solute passage. Required for conjugation with F-type plasmids; probably serves as the mating receptor on recipient cells. The polypeptide is Outer membrane protein A (Shigella dysenteriae).